The chain runs to 486 residues: Protein nucleotidyltransferase YdiU (486 aa).

Positions 90, 92, 93, 113, 125, 126, 176, and 183 each coordinate ATP. Asp-252 acts as the Proton acceptor in catalysis. Residues Asn-253 and Asp-262 each coordinate Mg(2+). Residue Asp-262 participates in ATP binding.

The protein belongs to the SELO family. The cofactor is Mg(2+). Requires Mn(2+) as cofactor.

It catalyses the reaction L-seryl-[protein] + ATP = 3-O-(5'-adenylyl)-L-seryl-[protein] + diphosphate. The catalysed reaction is L-threonyl-[protein] + ATP = 3-O-(5'-adenylyl)-L-threonyl-[protein] + diphosphate. The enzyme catalyses L-tyrosyl-[protein] + ATP = O-(5'-adenylyl)-L-tyrosyl-[protein] + diphosphate. It carries out the reaction L-histidyl-[protein] + UTP = N(tele)-(5'-uridylyl)-L-histidyl-[protein] + diphosphate. It catalyses the reaction L-seryl-[protein] + UTP = O-(5'-uridylyl)-L-seryl-[protein] + diphosphate. The catalysed reaction is L-tyrosyl-[protein] + UTP = O-(5'-uridylyl)-L-tyrosyl-[protein] + diphosphate. Its function is as follows. Nucleotidyltransferase involved in the post-translational modification of proteins. It can catalyze the addition of adenosine monophosphate (AMP) or uridine monophosphate (UMP) to a protein, resulting in modifications known as AMPylation and UMPylation. The polypeptide is Protein nucleotidyltransferase YdiU (Pseudomonas putida (strain ATCC 700007 / DSM 6899 / JCM 31910 / BCRC 17059 / LMG 24140 / F1)).